The following is a 360-amino-acid chain: Probable dual-specificity RNA methyltransferase RlmN (360 aa).

Glutamate 103 serves as the catalytic Proton acceptor. Residues 109-342 (HEYGNSVCVT…VTIRREQGHD (234 aa)) form the Radical SAM core domain. Cysteines 116 and 347 form a disulfide. [4Fe-4S] cluster is bound by residues cysteine 123, cysteine 127, and cysteine 130. S-adenosyl-L-methionine is bound by residues 173–174 (GE), serine 205, 228–230 (SLH), and asparagine 304. Catalysis depends on cysteine 347, which acts as the S-methylcysteine intermediate.

This sequence belongs to the radical SAM superfamily. RlmN family. It depends on [4Fe-4S] cluster as a cofactor.

Its subcellular location is the cytoplasm. It catalyses the reaction adenosine(2503) in 23S rRNA + 2 reduced [2Fe-2S]-[ferredoxin] + 2 S-adenosyl-L-methionine = 2-methyladenosine(2503) in 23S rRNA + 5'-deoxyadenosine + L-methionine + 2 oxidized [2Fe-2S]-[ferredoxin] + S-adenosyl-L-homocysteine. The enzyme catalyses adenosine(37) in tRNA + 2 reduced [2Fe-2S]-[ferredoxin] + 2 S-adenosyl-L-methionine = 2-methyladenosine(37) in tRNA + 5'-deoxyadenosine + L-methionine + 2 oxidized [2Fe-2S]-[ferredoxin] + S-adenosyl-L-homocysteine. Its function is as follows. Specifically methylates position 2 of adenine 2503 in 23S rRNA and position 2 of adenine 37 in tRNAs. The protein is Probable dual-specificity RNA methyltransferase RlmN of Bacillus pumilus (strain SAFR-032).